The primary structure comprises 404 residues: CCA-adding enzyme (404 aa).

Residues glycine 27 and arginine 30 each contribute to the ATP site. 2 residues coordinate CTP: glycine 27 and arginine 30. 2 residues coordinate Mg(2+): aspartate 40 and aspartate 42. Arginine 111, aspartate 154, arginine 157, arginine 160, and arginine 163 together coordinate ATP. The CTP site is built by arginine 111, aspartate 154, arginine 157, arginine 160, and arginine 163.

The protein belongs to the tRNA nucleotidyltransferase/poly(A) polymerase family. Bacterial CCA-adding enzyme type 3 subfamily. Homodimer. It depends on Mg(2+) as a cofactor.

It catalyses the reaction a tRNA precursor + 2 CTP + ATP = a tRNA with a 3' CCA end + 3 diphosphate. It carries out the reaction a tRNA with a 3' CCA end + 2 CTP + ATP = a tRNA with a 3' CCACCA end + 3 diphosphate. Its function is as follows. Catalyzes the addition and repair of the essential 3'-terminal CCA sequence in tRNAs without using a nucleic acid template. Adds these three nucleotides in the order of C, C, and A to the tRNA nucleotide-73, using CTP and ATP as substrates and producing inorganic pyrophosphate. tRNA 3'-terminal CCA addition is required both for tRNA processing and repair. Also involved in tRNA surveillance by mediating tandem CCA addition to generate a CCACCA at the 3' terminus of unstable tRNAs. While stable tRNAs receive only 3'-terminal CCA, unstable tRNAs are marked with CCACCA and rapidly degraded. The structural flexibility of RNA controls the choice between CCA versus CCACCA addition: following the first CCA addition cycle, nucleotide-binding to the active site triggers a clockwise screw motion, producing torque on the RNA. This ejects stable RNAs, whereas unstable RNAs are refolded while bound to the enzyme and subjected to a second CCA catalytic cycle. This chain is CCA-adding enzyme, found in Geobacillus stearothermophilus (Bacillus stearothermophilus).